We begin with the raw amino-acid sequence, 194 residues long: Adenylate kinase isoenzyme 1 (194 aa).

Alanine 2 carries the post-translational modification N-acetylalanine. 18-23 (GSGKGT) lines the ATP pocket. The interval 38–67 (SSGDLLRAEVASGSERGKQLQAIMQKGELV) is NMP. Residues serine 39, arginine 44, 65-67 (ELV), 94-97 (GYPR), and glutamine 101 each bind AMP. Residues 131–141 (KRGQTSGRSDD) form an LID region. Arginine 132 serves as a coordination point for ATP. AMP is bound by residues arginine 138 and arginine 149. Leucine 177 serves as a coordination point for ATP.

This sequence belongs to the adenylate kinase family. AK1 subfamily. Monomer. Mg(2+) is required as a cofactor.

It localises to the cytoplasm. It carries out the reaction a ribonucleoside 5'-phosphate + ATP = a ribonucleoside 5'-diphosphate + ADP. The enzyme catalyses AMP + ATP = 2 ADP. It catalyses the reaction dAMP + ATP = dADP + ADP. The catalysed reaction is dATP + AMP = dADP + ADP. It carries out the reaction dAMP + dATP = 2 dADP. The enzyme catalyses a 2'-deoxyribonucleoside 5'-diphosphate + ATP = a 2'-deoxyribonucleoside 5'-triphosphate + ADP. It catalyses the reaction a ribonucleoside 5'-diphosphate + ATP = a ribonucleoside 5'-triphosphate + ADP. The catalysed reaction is CDP + GTP = CTP + GDP. It carries out the reaction GDP + ATP = GTP + ADP. The enzyme catalyses UDP + ATP = UTP + ADP. It catalyses the reaction GTP + UDP = UTP + GDP. The catalysed reaction is dTDP + GTP = dTTP + GDP. It carries out the reaction dCDP + GTP = dCTP + GDP. The enzyme catalyses dGDP + ATP = dGTP + ADP. It catalyses the reaction dADP + GTP = dATP + GDP. The catalysed reaction is thiamine diphosphate + ADP = thiamine triphosphate + AMP. Its function is as follows. Catalyzes the reversible transfer of the terminal phosphate group between ATP and AMP. Also displays broad nucleoside diphosphate kinase activity. Plays an important role in cellular energy homeostasis and in adenine nucleotide metabolism. Also catalyzes at a very low rate the synthesis of thiamine triphosphate (ThTP) from thiamine diphosphate (ThDP) and ADP. The polypeptide is Adenylate kinase isoenzyme 1 (ak1) (Cyprinus carpio (Common carp)).